A 438-amino-acid polypeptide reads, in one-letter code: Metacaspase-1B (438 aa).

Positions 1-125 are disordered; the sequence is MYYHHSHQGW…SQHFGRGAPS (125 aa). Residues 29 to 38 show a composition bias toward low complexity; sequence PYPYSSNAQY. Over residues 39 to 74 the composition is skewed to pro residues; that stretch reads QPPPGPPPTSHYAPPPGPPPSHYYPPPGSYPSPAPS. Residues His-222 and Cys-278 contribute to the active site.

This sequence belongs to the peptidase C14B family.

Involved in cell death (apoptosis). The polypeptide is Metacaspase-1B (casB) (Aspergillus niger (strain ATCC MYA-4892 / CBS 513.88 / FGSC A1513)).